The chain runs to 476 residues: ENTH domain-containing protein C794.11c (476 aa).

The 125-residue stretch at 30–154 folds into the ENTH domain; sequence YTSMEARVRE…VELLNDSERI (125 aa). Disordered regions lie at residues 157 to 198, 213 to 308, 410 to 429, and 444 to 472; these read ERKR…GSYR, NGYH…GFGD, QAGLGLTSQQPTAAKSSGSN, and VHQENSTRERVVSSSSEPVSKTQNFLDND. At S173 the chain carries Phosphoserine. 2 stretches are compositionally biased toward low complexity: residues 178-198 and 213-222; these read RISTSSKSRFPSFGSSRGSYR and NGYHDSSSMS. A Phosphoserine modification is found at S228. Residues 229-240 are compositionally biased toward acidic residues; sequence DNDVEEYNEDGD. At Y235 the chain carries Phosphotyrosine. Residues S243 and S244 each carry the phosphoserine modification. Over residues 262-271 the composition is skewed to basic and acidic residues; the sequence is QSDKAPEQPK. Residues 444–454 show a composition bias toward basic and acidic residues; the sequence is VHQENSTRERV. At S459 the chain carries Phosphoserine.

The polypeptide is ENTH domain-containing protein C794.11c (Schizosaccharomyces pombe (strain 972 / ATCC 24843) (Fission yeast)).